The sequence spans 318 residues: Taste receptor type 2 member 60 (318 aa).

The Extracellular segment spans residues 1-7 (MNGDHMV). Residues 8–28 (LGSSVTDKKAIILVTILLLLR) form a helical membrane-spanning segment. Over 29 to 40 (LVAIAGNGFITA) the chain is Cytoplasmic. Residues 41–61 (ALGVEWVLRRMLLPCDKLLVS) form a helical membrane-spanning segment. Residues 62 to 88 (LGASHFCLQSVVMGKTIYVFLYPMAFP) are Extracellular-facing. Residues 89 to 109 (YNPVLQFLAFQWDFLNAATLW) form a helical membrane-spanning segment. Topologically, residues 110-128 (FSTWLSVFYCVKIATFTHP) are cytoplasmic. A helical membrane pass occupies residues 129-149 (VFFWLKHKLSGWLPWMVFSYV). At 150 to 183 (GLSSFTTILFFIGNHRMYQNYLKNHLQPWNVTGN) the chain is on the extracellular side. N-linked (GlcNAc...) asparagine glycosylation is present at Asn179. The chain crosses the membrane as a helical span at residues 184-204 (SIRSYCEKFYLFPLKMITWTM). The Cytoplasmic portion of the chain corresponds to 205 to 234 (PTAVFFICMILLITSLGRHMKKALLTTSGF). The chain crosses the membrane as a helical span at residues 235 to 255 (REPSVQAHIKALLALLSFAML). The Extracellular portion of the chain corresponds to 256–264 (FISYFLSLV). The helical transmembrane segment at 265-285 (FSAAGIFPPLDFKFWVWESVI) threads the bilayer. Residues 286-318 (YLCAAVHPIILLFSNCRLRAVLKSRRSSRCGTP) lie on the Cytoplasmic side of the membrane.

The protein belongs to the G-protein coupled receptor T2R family.

The protein localises to the membrane. Receptor that may play a role in the perception of bitterness and is gustducin-linked. May play a role in sensing the chemical composition of the gastrointestinal content. The activity of this receptor may stimulate alpha gustducin, mediate PLC-beta-2 activation and lead to the gating of TRPM5. The polypeptide is Taste receptor type 2 member 60 (TAS2R60) (Pan troglodytes (Chimpanzee)).